A 286-amino-acid polypeptide reads, in one-letter code: MQTVHTRAALAAALDPWRRAGERIALVPTMGNLHAGHLALVRRARAEADRVVATIFVNPLQFDRPEDLAAYPRTLEADAAALAGAGVDLLFAPAEQEVYPRGRDGVTRVEVPGLGDELEGAHRPGHFIGVATVVCKLFAMTRPDVAVFGEKDFQQLLIIRTMNADLDLGVRVLSEPTVREPDGLAMSSRNGYLGPEDRARAPALHAALRALAGALERGERDFPALEQAARSQIEAAGLRPEYVSLRRRQDLDLPGPGDRELVILAAAWCGPARLIDNLPVDLPPSG.

30–37 serves as a coordination point for ATP; the sequence is MGNLHAGH. The active-site Proton donor is the His37. Gln61 contacts (R)-pantoate. Gln61 contributes to the beta-alanine binding site. 149 to 152 contacts ATP; the sequence is GEKD. (R)-pantoate is bound at residue Gln155. Residues Val178 and 186-189 contribute to the ATP site; that span reads MSSR.

The protein belongs to the pantothenate synthetase family. As to quaternary structure, homodimer.

Its subcellular location is the cytoplasm. The catalysed reaction is (R)-pantoate + beta-alanine + ATP = (R)-pantothenate + AMP + diphosphate + H(+). The protein operates within cofactor biosynthesis; (R)-pantothenate biosynthesis; (R)-pantothenate from (R)-pantoate and beta-alanine: step 1/1. Catalyzes the condensation of pantoate with beta-alanine in an ATP-dependent reaction via a pantoyl-adenylate intermediate. The sequence is that of Pantothenate synthetase from Thioalkalivibrio sulfidiphilus (strain HL-EbGR7).